The sequence spans 766 residues: Serine/threonine-protein kinase tousled-like 1 (766 aa).

N-acetylmethionine is present on Met-1. Over residues 1-19 the composition is skewed to polar residues; sequence MSVQSSSGSLEGPPSWSQL. The interval 1-197 is disordered; it reads MSVQSSSGSL…SPSPTALAFG (197 aa). A compositionally biased stretch (low complexity) spans 20 to 33; sequence STSPTPGSAAAARS. Thr-38 bears the Phosphothreonine mark. Residues 43–64 show a composition bias toward basic and acidic residues; sequence RPREGAMDELHSLDPRRQELLE. 3 positions are modified to phosphoserine: Ser-54, Ser-77, and Ser-80. Positions 68 to 85 are enriched in low complexity; the sequence is TGVASGSTGSTGSCSVGA. The segment covering 87–103 has biased composition (polar residues); sequence ASTNNESSNHSFGSLGS. Over residues 105 to 121 the composition is skewed to basic and acidic residues; the sequence is SDKESETPEKKQSESSR. Phosphoserine occurs at positions 134, 159, 174, and 176. A compositionally biased stretch (low complexity) spans 170 to 192; it reads SPQNSHSHSTPSSSVRPNSPSPT. Residues 230–281 adopt a coiled-coil conformation; the sequence is QDLEKKEGRIDDLLRANCDLRRQIDEQQKLLEKYKERLNKCISMSKKLLIEK. The interval 346–383 is disordered; the sequence is LAKRKPPTANNSQAPSTNSEPKQRKNKAVNGAENDPFV. Positions 353–365 are enriched in polar residues; that stretch reads TANNSQAPSTNSE. Residues 397–445 adopt a coiled-coil conformation; it reads HEQEEIFKLRLGHLKKEEAEIQAELERLERVRNLHIRELKRINNEDNSQ. The Protein kinase domain maps to 456–734; it reads YLLLHLLGRG…VHQLANDPYL (279 aa). ATP contacts are provided by residues 462–470 and Lys-485; that span reads LGRGGFSEV. The Proton acceptor role is filled by Asp-586. Ser-743 is modified (phosphoserine).

Belongs to the protein kinase superfamily. Ser/Thr protein kinase family. In terms of assembly, heterodimer with TLK2. It depends on Mg(2+) as a cofactor. In terms of tissue distribution, widely expressed. Present in fetal placenta, liver, kidney and pancreas but not heart or skeletal muscle. Also found in adult cell lines. Isoform 3 is ubiquitously expressed in all tissues examined.

The protein localises to the nucleus. It carries out the reaction L-seryl-[protein] + ATP = O-phospho-L-seryl-[protein] + ADP + H(+). It catalyses the reaction L-threonyl-[protein] + ATP = O-phospho-L-threonyl-[protein] + ADP + H(+). With respect to regulation, cell-cycle regulated, maximal activity in S-phase. Inactivated by phosphorylation at Ser-743, potentially by CHEK1. In terms of biological role, rapidly and transiently inhibited by phosphorylation following the generation of DNA double-stranded breaks during S-phase. This is cell cycle checkpoint and ATM-pathway dependent and appears to regulate processes involved in chromatin assembly. Isoform 3 phosphorylates and enhances the stability of the t-SNARE SNAP23, augmenting its assembly with syntaxin. Isoform 3 protects the cells from the ionizing radiation by facilitating the repair of DSBs. In vitro, phosphorylates histone H3 at 'Ser-10'. This Homo sapiens (Human) protein is Serine/threonine-protein kinase tousled-like 1 (TLK1).